We begin with the raw amino-acid sequence, 105 residues long: UPF0060 membrane protein Reut_B3679 (105 aa).

4 helical membrane passes run 4 to 24 (IALY…PYLW), 28 to 48 (GASA…AWLL), 60 to 80 (AAYG…VDGV), and 82 to 102 (PSAW…IIVF).

It belongs to the UPF0060 family.

It is found in the cell inner membrane. This chain is UPF0060 membrane protein Reut_B3679, found in Cupriavidus pinatubonensis (strain JMP 134 / LMG 1197) (Cupriavidus necator (strain JMP 134)).